A 190-amino-acid chain; its full sequence is Adenylate kinase (190 aa).

Residue 12–17 (GSGKTT) coordinates ATP. The segment at 33–62 (STGDLLRAEVASGSELGKTIDSFISKGNLV) is NMP. AMP is bound by residues Thr-34, Arg-39, 60-62 (NLV), 87-90 (GYPR), and Gln-94. Residues 129-135 (GRARGAD) form an LID region. Arg-130 provides a ligand contact to ATP. Arg-132 and Arg-144 together coordinate AMP. Arg-172 is a binding site for ATP.

It belongs to the adenylate kinase family. In terms of assembly, monomer.

It localises to the cytoplasm. The catalysed reaction is AMP + ATP = 2 ADP. It participates in purine metabolism; AMP biosynthesis via salvage pathway; AMP from ADP: step 1/1. Functionally, catalyzes the reversible transfer of the terminal phosphate group between ATP and AMP. Plays an important role in cellular energy homeostasis and in adenine nucleotide metabolism. This chain is Adenylate kinase, found in Campylobacter lari (strain RM2100 / D67 / ATCC BAA-1060).